Here is a 116-residue protein sequence, read N- to C-terminus: Cation channel sperm-associated auxiliary subunit TMEM262 (116 aa).

At 1 to 16 the chain is on the cytoplasmic side; sequence MWLQDRIATFFFPKGM. The helical transmembrane segment at 17–38 threads the bilayer; it reads MLTTAALMLFFLHLGIFIRDVH. At 39–51 the chain is on the extracellular side; the sequence is NFCITYHYDHMSF. A helical transmembrane segment spans residues 52-72; the sequence is HYTVVLMFSQVISICWAAMGS. Residues 73–84 are Cytoplasmic-facing; the sequence is LYAEMTENKYVC. The helical transmembrane segment at 85–107 threads the bilayer; that stretch reads FSALTILMLNGAMFFNRLSLEFL. Residues 108-116 are Extracellular-facing; it reads AIEYREEHH.

As to quaternary structure, component of the CatSper complex or CatSpermasome composed of the core pore-forming members CATSPER1, CATSPER2, CATSPER3 and CATSPER4 as well as auxiliary members CATSPERB, CATSPERG, CATSPERD, CATSPERE, CATSPERZ, C2CD6/CATSPERT, TMEM249, TMEM262 and EFCAB9. HSPA1 may be an additional auxiliary complex member. The core complex members CATSPER1, CATSPER2, CATSPER3 and CATSPER4 form a heterotetrameric channel. The auxiliary CATSPERB, CATSPERG, CATSPERD and CATSPERE subunits form a pavilion-like structure over the pore which stabilizes the complex through interactions with CATSPER4, CATSPER3, CATSPER1 and CATSPER2 respectively. TMEM262/CATSPERH interacts with CATSPERB, further stabilizing the complex. C2CD6/CATSPERT interacts at least with CATSPERD and is required for targeting the CatSper complex in the flagellar membrane.

It localises to the cell projection. Its subcellular location is the cilium. The protein resides in the flagellum membrane. In terms of biological role, auxiliary component of the CatSper complex, a complex involved in sperm cell hyperactivation. The protein is Cation channel sperm-associated auxiliary subunit TMEM262 of Homo sapiens (Human).